A 264-amino-acid chain; its full sequence is S-adenosylmethionine decarboxylase proenzyme (264 aa).

Ser112 functions as the Schiff-base intermediate with substrate; via pyruvic acid in the catalytic mechanism. Ser112 carries the pyruvic acid (Ser); by autocatalysis modification. The active-site Proton acceptor; for processing activity is the His117. The active-site Proton donor; for catalytic activity is Cys140.

It belongs to the prokaryotic AdoMetDC family. Type 2 subfamily. As to quaternary structure, heterooctamer of four alpha and four beta chains arranged as a tetramer of alpha/beta heterodimers. Pyruvate is required as a cofactor. In terms of processing, is synthesized initially as an inactive proenzyme. Formation of the active enzyme involves a self-maturation process in which the active site pyruvoyl group is generated from an internal serine residue via an autocatalytic post-translational modification. Two non-identical subunits are generated from the proenzyme in this reaction, and the pyruvate is formed at the N-terminus of the alpha chain, which is derived from the carboxyl end of the proenzyme. The post-translation cleavage follows an unusual pathway, termed non-hydrolytic serinolysis, in which the side chain hydroxyl group of the serine supplies its oxygen atom to form the C-terminus of the beta chain, while the remainder of the serine residue undergoes an oxidative deamination to produce ammonia and the pyruvoyl group blocking the N-terminus of the alpha chain.

It carries out the reaction S-adenosyl-L-methionine + H(+) = S-adenosyl 3-(methylsulfanyl)propylamine + CO2. It participates in amine and polyamine biosynthesis; S-adenosylmethioninamine biosynthesis; S-adenosylmethioninamine from S-adenosyl-L-methionine: step 1/1. In terms of biological role, catalyzes the decarboxylation of S-adenosylmethionine to S-adenosylmethioninamine (dcAdoMet), the propylamine donor required for the synthesis of the polyamines spermine and spermidine from the diamine putrescine. This Salmonella dublin (strain CT_02021853) protein is S-adenosylmethionine decarboxylase proenzyme.